A 342-amino-acid chain; its full sequence is Guanine nucleotide-binding protein alpha-9 subunit (342 aa).

Gly2 carries the N-myristoyl glycine lipid modification. Residue Cys3 is the site of S-palmitoyl cysteine attachment. One can recognise a G-alpha domain in the interval 28 to 342 (REIKLLLLGS…IIQSILKLHY (315 aa)). The interval 31–44 (KLLLLGSGDSGKST) is G1 motif. GTP is bound by residues 36 to 43 (GSGDSGKS), 167 to 173 (LRCRQRT), 192 to 196 (DVGGQ), 261 to 264 (NKND), and Ala316. Mg(2+) is bound by residues Ser43 and Thr173. The tract at residues 165-173 (DVLRCRQRT) is G2 motif. A G3 motif region spans residues 188-197 (FRLIDVGGQK). The segment at 257–264 (VLFLNKND) is G4 motif. A G5 motif region spans residues 314–319 (TTATDT).

Belongs to the G-alpha family. In terms of assembly, g proteins are composed of 3 units; alpha, beta and gamma. The alpha chain contains the guanine nucleotide binding site.

Its function is as follows. Guanine nucleotide-binding proteins (G proteins) are involved as modulators or transducers in various transmembrane signaling systems. G alpha-9 antagonizes broad chemotactic response. It functions rapidly following receptor stimulation to negatively regulate PI3K/PTEN, adenylyl cyclase, and guanylyl cyclase pathways. This Dictyostelium discoideum (Social amoeba) protein is Guanine nucleotide-binding protein alpha-9 subunit (gpaI).